A 276-amino-acid polypeptide reads, in one-letter code: ATP synthase subunit a (276 aa).

A run of 7 helical transmembrane segments spans residues 49–69 (KPML…FAAA), 109–129 (YLFT…IPFI), 137–157 (SGMV…AGIS), 173–193 (GIRG…NILV), 203–223 (FANM…GEYI), 232–252 (APVG…EMLI), and 253–273 (QFLQ…GAVA).

This sequence belongs to the ATPase A chain family. As to quaternary structure, F-type ATPases have 2 components, CF(1) - the catalytic core - and CF(0) - the membrane proton channel. CF(1) has five subunits: alpha(3), beta(3), gamma(1), delta(1), epsilon(1). CF(0) has three main subunits: a(1), b(2) and c(9-12). The alpha and beta chains form an alternating ring which encloses part of the gamma chain. CF(1) is attached to CF(0) by a central stalk formed by the gamma and epsilon chains, while a peripheral stalk is formed by the delta and b chains.

The protein localises to the cell membrane. Functionally, key component of the proton channel; it plays a direct role in the translocation of protons across the membrane. The protein is ATP synthase subunit a of Nocardioides sp. (strain ATCC BAA-499 / JS614).